The following is a 49-amino-acid chain: Putative DNA-directed RNA polymerase subunit omega (49 aa).

It belongs to the RNA polymerase subunit omega family.

Its subcellular location is the plastid. It localises to the chloroplast. The enzyme catalyses RNA(n) + a ribonucleoside 5'-triphosphate = RNA(n+1) + diphosphate. Functionally, may be involved in RNA polymerase activity. The polypeptide is Putative DNA-directed RNA polymerase subunit omega (rpoZ) (Cyanidioschyzon merolae (strain NIES-3377 / 10D) (Unicellular red alga)).